We begin with the raw amino-acid sequence, 387 residues long: RNA polymerase II elongation factor ELL3 (387 aa).

Disordered regions lie at residues 127-148 (LTEG…EGHP) and 186-275 (LSNR…EEVP). Polar residues predominate over residues 230–239 (SPLQGLSNQD). Position 240 is a phosphoserine (Ser-240). Acidic residues predominate over residues 240-251 (SPEEQDWGQDAD). A compositionally biased stretch (low complexity) spans 257-271 (EQSLSVQSASESPSP). Positions 275–385 (PDYLLQYSTI…LILEFEEKNR (111 aa)) constitute an OCEL domain.

Belongs to the ELL/occludin family. Interacts with AFF4. Component of the super elongation complex (SEC), at least composed of EAF1, EAF2, CDK9, MLLT3/AF9, AFF (AFF1 or AFF4), the P-TEFb complex and ELL (ELL, ELL2 or ELL3). Component of the little elongation complex (LEC), at least composed of ELL (ELL, ELL2 or ELL3), ZC3H8, ICE1 and ICE2.

The protein localises to the nucleus. Functionally, enhancer-binding elongation factor that specifically binds enhancers in embryonic stem cells (ES cells), marks them, and is required for their future activation during stem cell specification. Elongation factor component of the super elongation complex (SEC), a complex required to increase the catalytic rate of RNA polymerase II transcription by suppressing transient pausing by the polymerase at multiple sites along the DNA. Component of the little elongation complex (LEC), a complex required to regulate small nuclear RNA (snRNA) gene transcription by RNA polymerase II and III. Does not only bind to enhancer regions of active genes, but also marks the enhancers that are in a poised or inactive state in ES cells and is required for establishing proper RNA polymerase II occupancy at developmentally regulated genes in a cohesin-dependent manner. Probably required for priming developmentally regulated genes for later recruitment of the super elongation complex (SEC), for transcriptional activation during differentiation. Required for recruitment of P-TEFb within SEC during differentiation. Probably preloaded on germ cell chromatin, suggesting that it may prime gene activation by marking enhancers as early as in the germ cells. Promoting epithelial-mesenchymal transition (EMT). The sequence is that of RNA polymerase II elongation factor ELL3 (Ell3) from Rattus norvegicus (Rat).